The sequence spans 329 residues: D-lactate dehydrogenase (329 aa).

NAD(+)-binding positions include 154 to 155, Asp-174, 205 to 206, Asn-211, 232 to 234, and Asp-258; these read KI, CP, and TSR. Arg-234 is a catalytic residue. Glu-263 is an active-site residue. His-295 (proton donor) is an active-site residue.

Belongs to the D-isomer specific 2-hydroxyacid dehydrogenase family.

The enzyme catalyses (R)-lactate + NAD(+) = pyruvate + NADH + H(+). Functionally, fermentative lactate dehydrogenase. This is D-lactate dehydrogenase (ldhA) from Escherichia coli (strain K12).